Reading from the N-terminus, the 165-residue chain is S-ribosylhomocysteine lyase (165 aa).

Fe cation is bound by residues H54, H58, and C128.

Belongs to the LuxS family. Homodimer. Fe cation serves as cofactor.

It carries out the reaction S-(5-deoxy-D-ribos-5-yl)-L-homocysteine = (S)-4,5-dihydroxypentane-2,3-dione + L-homocysteine. Functionally, involved in the synthesis of autoinducer 2 (AI-2) which is secreted by bacteria and is used to communicate both the cell density and the metabolic potential of the environment. The regulation of gene expression in response to changes in cell density is called quorum sensing. Catalyzes the transformation of S-ribosylhomocysteine (RHC) to homocysteine (HC) and 4,5-dihydroxy-2,3-pentadione (DPD). The sequence is that of S-ribosylhomocysteine lyase from Helicobacter hepaticus (strain ATCC 51449 / 3B1).